The primary structure comprises 148 residues: Large ribosomal subunit protein uL15 (148 aa).

The span at 1 to 30 (MPSRLRKTRKLRGHVSHGHGRIGKHRKHPG) shows a compositional bias: basic residues. The segment at 1–38 (MPSRLRKTRKLRGHVSHGHGRIGKHRKHPGGRGNAGGL) is disordered. H39 is modified ((3S)-3-hydroxyhistidine). N6-acetyllysine is present on residues K47 and K55. Position 68 is a phosphoserine (S68). Residue K110 is modified to N6-acetyllysine.

This sequence belongs to the universal ribosomal protein uL15 family. As to quaternary structure, component of the large ribosomal subunit. In terms of processing, hydroxylated on His-39 by MINA.

The protein localises to the cytoplasm. Its function is as follows. Component of the large ribosomal subunit. The ribosome is a large ribonucleoprotein complex responsible for the synthesis of proteins in the cell. This is Large ribosomal subunit protein uL15 (RPL27A) from Homo sapiens (Human).